Consider the following 264-residue polypeptide: uncharacterized protein (264 aa).

The helical transmembrane segment at 182–198 threads the bilayer; that stretch reads TVTGVSNALGFIIAALL.

To E.coli YjiC.

The protein resides in the membrane. This is an uncharacterized protein from Escherichia coli (strain K12).